The sequence spans 529 residues: T-complex protein 1 subunit delta (529 aa).

It belongs to the TCP-1 chaperonin family. In terms of assembly, heterooligomeric complex of about 850 to 900 kDa that forms two stacked rings, 12 to 16 nm in diameter.

The protein resides in the cytoplasm. Molecular chaperone; assists the folding of proteins upon ATP hydrolysis. Known to play a role, in vitro, in the folding of actin and tubulin. This is T-complex protein 1 subunit delta (CCT4) from Candida glabrata (strain ATCC 2001 / BCRC 20586 / JCM 3761 / NBRC 0622 / NRRL Y-65 / CBS 138) (Yeast).